Reading from the N-terminus, the 82-residue chain is DNA-directed RNA polymerase subunit omega (82 aa).

It belongs to the RNA polymerase subunit omega family. As to quaternary structure, the RNAP catalytic core consists of 2 alpha, 1 beta, 1 beta' and 1 omega subunit. When a sigma factor is associated with the core the holoenzyme is formed, which can initiate transcription.

It carries out the reaction RNA(n) + a ribonucleoside 5'-triphosphate = RNA(n+1) + diphosphate. Functionally, promotes RNA polymerase assembly. Latches the N- and C-terminal regions of the beta' subunit thereby facilitating its interaction with the beta and alpha subunits. This chain is DNA-directed RNA polymerase subunit omega, found in Lacticaseibacillus casei (strain BL23) (Lactobacillus casei).